A 287-amino-acid polypeptide reads, in one-letter code: Probable prolyl 4-hydroxylase 3 (287 aa).

The Cytoplasmic segment spans residues 1 to 16; it reads MAKLRHSRFQARKWST. Residues 17 to 37 form a helical; Signal-anchor for type II membrane protein membrane-spanning segment; sequence LMLVLFMLFMLTIVLLMLLAF. Over 38–287 the chain is Lumenal; that stretch reads GVFSLPINND…KWMHVGEYKI (250 aa). Positions 159–282 constitute a Fe2OG dioxygenase domain; sequence HGEGLQVLHY…KWSSTKWMHV (124 aa). The Fe cation site is built by H177 and D179. The N-linked (GlcNAc...) asparagine glycan is linked to N218. H263 provides a ligand contact to Fe cation. K273 provides a ligand contact to 2-oxoglutarate.

This sequence belongs to the P4HA family. Requires Fe(2+) as cofactor. The cofactor is L-ascorbate.

Its subcellular location is the endoplasmic reticulum membrane. It catalyses the reaction L-prolyl-[collagen] + 2-oxoglutarate + O2 = trans-4-hydroxy-L-prolyl-[collagen] + succinate + CO2. Its function is as follows. Catalyzes the post-translational formation of 4-hydroxyproline in -Xaa-Pro-Gly- sequences in proline-rich peptide sequences of plant glycoproteins and other proteins. Hydroxyprolines are important constituent of many plant cell wall glycoproteins such as extensins, hydroxyproline-rich glycoproteins, lectins and arabinogalactan proteins. The protein is Probable prolyl 4-hydroxylase 3 of Arabidopsis thaliana (Mouse-ear cress).